The primary structure comprises 139 residues: Plasmid stability protein StbB (139 aa).

The region spanning I2–P136 is the PINc domain. Mg(2+) is bound by residues D5 and D104.

It belongs to the PINc/VapC protein family. Mg(2+) serves as cofactor.

Toxic component of a type II toxin-antitoxin (TA) system. An RNase. Involved in plasmid stability. The protein is Plasmid stability protein StbB (stbB) of Pseudomonas syringae pv. tomato (strain ATCC BAA-871 / DC3000).